The sequence spans 212 residues: Thymidylate kinase (212 aa).

7–14 (GGEGCGKT) serves as a coordination point for ATP.

The protein belongs to the thymidylate kinase family.

The enzyme catalyses dTMP + ATP = dTDP + ADP. Phosphorylation of dTMP to form dTDP in both de novo and salvage pathways of dTTP synthesis. The protein is Thymidylate kinase of Gloeobacter violaceus (strain ATCC 29082 / PCC 7421).